A 301-amino-acid chain; its full sequence is Mitochondrial substrate carrier family protein Z (301 aa).

The Mitochondrial intermembrane portion of the chain corresponds to 1-19 (MTGKEENKQQQHVNFPWKR). Solcar repeat units follow at residues 14–101 (NFPW…FTEQ), 116–200 (QQFG…ISDY), and 210–293 (LPVW…VMGI). Residues 20–37 (LVAGAVAGTADVWACHPL) traverse the membrane as a helical segment. Topologically, residues 38–65 (DRIKTQLQNNPGKSIVGTFGDIVSKGKG) are mitochondrial matrix. A helical transmembrane segment spans residues 66 to 86 (FTGGVNALYEGILPMTAEAIF). The Mitochondrial intermembrane segment spans residues 87–117 (KVGIRYFAFSWFTEQYKTTVYKGETLNKKQQ). A helical transmembrane segment spans residues 118 to 138 (FGANLLGGAFAGTIESFVVVI). The Mitochondrial matrix portion of the chain corresponds to 139-174 (PCELLKVRHMTQEHNKSFGTVFRDVLREEGFQGLYK). A helical membrane pass occupies residues 175–191 (GGSATLLRQITNHMIRF). Residues 192–212 (PTFYAISDYLKGGDHSVHLPV) are Mitochondrial intermembrane-facing. The chain crosses the membrane as a helical span at residues 213-229 (WQNLSAGAIAGTASTLF). Over 230 to 275 (NNPLDTIKTRMQKQGQNQTTMQVVRGIYQETGVKGYWAGVIPRILR) the chain is Mitochondrial matrix. The chain crosses the membrane as a helical span at residues 276–296 (VAPGQAITWAVVELVMGILEP). Over 297-301 (SSKKH) the chain is Mitochondrial intermembrane.

It belongs to the mitochondrial carrier (TC 2.A.29) family.

Its subcellular location is the mitochondrion inner membrane. Mitochondrial solute carriers shuttle metabolites, nucleotides, and cofactors through the mitochondrial inner membrane. The protein is Mitochondrial substrate carrier family protein Z (mcfZ) of Dictyostelium discoideum (Social amoeba).